Here is a 238-residue protein sequence, read N- to C-terminus: Succinate dehydrogenase assembly factor 2, mitochondrial (238 aa).

The interval 47-82 (GLKADGSRADQAEAGASQSLDKQSRTLDSVRDDTLS) is disordered. The segment covering 68-80 (KQSRTLDSVRDDT) has biased composition (basic and acidic residues).

This sequence belongs to the SDHAF2 family. Interacts with the flavoprotein subunit within the SDH catalytic dimer.

The protein resides in the mitochondrion matrix. Plays an essential role in the assembly of succinate dehydrogenase (SDH), an enzyme complex (also referred to as respiratory complex II) that is a component of both the tricarboxylic acid (TCA) cycle and the mitochondrial electron transport chain, and which couples the oxidation of succinate to fumarate with the reduction of ubiquinone (coenzyme Q) to ubiquinol. Required for flavinylation (covalent attachment of FAD) of the flavoprotein subunit of the SDH catalytic dimer. The protein is Succinate dehydrogenase assembly factor 2, mitochondrial of Mycosarcoma maydis (Corn smut fungus).